The sequence spans 265 residues: Undecaprenyl-diphosphatase (265 aa).

8 helical membrane-spanning segments follow: residues 1-21 (MDFIHILALAILQGLTEFLPI), 39-61 (QGLAFDVAVHLGTLVAVISYFRL), 85-105 (LAWAVLLGTLPVGLVGIMLTE), 115-135 (LIIAWSTVGFGFLLAYADWAG), 149-169 (ILFIGLAQALALIPGTSRSGI), 187-207 (FSFLLAIPVILLAGGLAALDL), 218-238 (ALALGALISGLCAYACIHYFF), and 244-264 (IGMLPFAVYRLLLGALLFYLF).

This sequence belongs to the UppP family.

It is found in the cell inner membrane. The catalysed reaction is di-trans,octa-cis-undecaprenyl diphosphate + H2O = di-trans,octa-cis-undecaprenyl phosphate + phosphate + H(+). In terms of biological role, catalyzes the dephosphorylation of undecaprenyl diphosphate (UPP). Confers resistance to bacitracin. The protein is Undecaprenyl-diphosphatase of Nitrosococcus oceani (strain ATCC 19707 / BCRC 17464 / JCM 30415 / NCIMB 11848 / C-107).